The primary structure comprises 175 residues: ATP synthase subunit b (175 aa).

Residues 20 to 40 (LIFWTAVTFVIVLVILKKIAW) form a helical membrane-spanning segment.

This sequence belongs to the ATPase B chain family. In terms of assembly, F-type ATPases have 2 components, F(1) - the catalytic core - and F(0) - the membrane proton channel. F(1) has five subunits: alpha(3), beta(3), gamma(1), delta(1), epsilon(1). F(0) has four main subunits: a(1), b(2) and c(10-14). The alpha and beta chains form an alternating ring which encloses part of the gamma chain. F(1) is attached to F(0) by a central stalk formed by the gamma and epsilon chains, while a peripheral stalk is formed by the delta and b chains.

The protein resides in the cell inner membrane. F(1)F(0) ATP synthase produces ATP from ADP in the presence of a proton or sodium gradient. F-type ATPases consist of two structural domains, F(1) containing the extramembraneous catalytic core and F(0) containing the membrane proton channel, linked together by a central stalk and a peripheral stalk. During catalysis, ATP synthesis in the catalytic domain of F(1) is coupled via a rotary mechanism of the central stalk subunits to proton translocation. In terms of biological role, component of the F(0) channel, it forms part of the peripheral stalk, linking F(1) to F(0). This Chlorobaculum parvum (strain DSM 263 / NCIMB 8327) (Chlorobium vibrioforme subsp. thiosulfatophilum) protein is ATP synthase subunit b.